The sequence spans 1715 residues: Protein PHYLLO, chloroplastic (1715 aa).

The transit peptide at 1-19 (MRSSFLVSNPPFLPSLIPR) directs the protein to the chloroplast. The inactive isochorismate synthase stretch occupies residues 20 to 273 (YSSRKSIRRS…EKSIFQVSSH (254 aa)). The tract at residues 363 to 933 (NAVWASAIIE…GTKSELEDAL (571 aa)) is 2-succinyl-5-enolpyruvyl-6-hydroxy-3-cyclohexene-1-carboxylate synthase. Residues 429 to 449 (AVIITSSGTAVSNLLPAVVEA) form a helical membrane-spanning segment. An O-succinylbenzoate synthase region spans residues 981–1364 (FLHPMIKNVL…SEDVMMNTLG (384 aa)). The Proton donor; for the o-succinylbenzoate synthase activity role is filled by lysine 1170. Mg(2+) contacts are provided by aspartate 1202, glutamate 1228, and aspartate 1251. The active-site Proton acceptor; for the o-succinylbenzoate synthase activity is the lysine 1279. The interval 1418 to 1715 (HFIRVHDVGE…QKLLLALKEM (298 aa)) is 2-succinyl-6-hydroxy-2,4-cyclohexadiene-1-carboxylate synthase. The 106-residue stretch at 1435–1540 (LFLHGFLGTG…EGAVVVSGSP (106 aa)) folds into the AB hydrolase-1 domain.

It in the N-terminal section; belongs to the isochorismate synthase family. This sequence in the 2nd section; belongs to the TPP enzyme family. MenD subfamily. In the 3rd section; belongs to the mandelate racemase/muconate lactonizing enzyme family. MenC type 1 subfamily. The protein in the C-terminal section; belongs to the AB hydrolase superfamily. MenH family. Mg(2+) is required as a cofactor. It depends on Mn(2+) as a cofactor. The cofactor is thiamine diphosphate.

The protein localises to the plastid. It localises to the chloroplast membrane. It catalyses the reaction isochorismate + 2-oxoglutarate + H(+) = 5-enolpyruvoyl-6-hydroxy-2-succinyl-cyclohex-3-ene-1-carboxylate + CO2. The enzyme catalyses (1R,6R)-6-hydroxy-2-succinyl-cyclohexa-2,4-diene-1-carboxylate = 2-succinylbenzoate + H2O. It carries out the reaction 5-enolpyruvoyl-6-hydroxy-2-succinyl-cyclohex-3-ene-1-carboxylate = (1R,6R)-6-hydroxy-2-succinyl-cyclohexa-2,4-diene-1-carboxylate + pyruvate. Functionally, multifunctional enzyme required for phylloquinone (vitamin K1) biosynthesis. The chain is Protein PHYLLO, chloroplastic (PHYLLO) from Arabidopsis thaliana (Mouse-ear cress).